A 453-amino-acid chain; its full sequence is Phosphoglucosamine mutase (453 aa).

S109 functions as the Phosphoserine intermediate in the catalytic mechanism. Positions 109, 246, 248, and 250 each coordinate Mg(2+). Residue S109 is modified to Phosphoserine.

Belongs to the phosphohexose mutase family. Mg(2+) is required as a cofactor. Post-translationally, activated by phosphorylation.

The catalysed reaction is alpha-D-glucosamine 1-phosphate = D-glucosamine 6-phosphate. Functionally, catalyzes the conversion of glucosamine-6-phosphate to glucosamine-1-phosphate. The protein is Phosphoglucosamine mutase of Leifsonia xyli subsp. xyli (strain CTCB07).